A 259-amino-acid polypeptide reads, in one-letter code: Bis(5'-nucleosyl)-tetraphosphatase, symmetrical (259 aa).

This sequence belongs to the Ap4A hydrolase family.

The enzyme catalyses P(1),P(4)-bis(5'-adenosyl) tetraphosphate + H2O = 2 ADP + 2 H(+). Functionally, hydrolyzes diadenosine 5',5'''-P1,P4-tetraphosphate to yield ADP. The chain is Bis(5'-nucleosyl)-tetraphosphatase, symmetrical (apaH) from Klebsiella aerogenes (Enterobacter aerogenes).